A 170-amino-acid polypeptide reads, in one-letter code: Adenine phosphoribosyltransferase (170 aa).

It belongs to the purine/pyrimidine phosphoribosyltransferase family. In terms of assembly, homodimer.

The protein resides in the cytoplasm. It catalyses the reaction AMP + diphosphate = 5-phospho-alpha-D-ribose 1-diphosphate + adenine. The protein operates within purine metabolism; AMP biosynthesis via salvage pathway; AMP from adenine: step 1/1. In terms of biological role, catalyzes a salvage reaction resulting in the formation of AMP, that is energically less costly than de novo synthesis. The sequence is that of Adenine phosphoribosyltransferase from Bacillus pumilus (strain SAFR-032).